The following is a 609-amino-acid chain: MKVNSTTEIIKSLLECLSKEISNGEDEDTMITDITELFNLSKEFDVRKEISNKHNEFLNILMNYIIKSTTANGDNNEKLFKFNLTSIRFLRNLCANVSENQNIIISNSNFINFIINQLINENNNIKITLNKKNILTSLYQLLINGIVLNDKTQSLLWSNIYPNNLIILIEKYKDNDEFKLLPTNLMLIYNCILNSKDRMKDLVCNKRLVQLIIELIKEDDTFDHEYNTQNFHWIHLISKSLFINDLFIDLYKSLSDNKYSTELVKSTTESTTESTTTESTDSTTDSTTTTTTGKTNKNQVKLLNLLDSIIHDGDKKNIKEYIEKDSIIDLKTCYFMIDELASLYNLDFARKDLKVETQQLTTSLNQSDFDAIFFFIKIFANITSYTEEMLSLSLSIFKPNQIPTKQQEGEEDPVNQILNDPFSKDSAIDPSASKKFDLNTLLRKKGLVAICIGSLHGNYGSDTNKSSSSSSSSSSSTTTDGETVTSKGFNKNIESQDKGFKIELIRILGNLSYKNRGNQDEIRELGGIEIILNHCRFDVNNPYIKEWSVFAIRNLCEDNVENQNLIESLKVKGVANNDELKDLGLEVGVTENGTIKFKNVPKKEKENNQ.

3 disordered regions span residues 265–293, 405–426, and 461–490; these read KSTT…TTTG, KQQE…SKDS, and SDTN…KGFN. The segment covering 266-292 has biased composition (low complexity); that stretch reads STTESTTESTTTESTDSTTDSTTTTTT. Residues 466–479 show a composition bias toward low complexity; the sequence is SSSSSSSSSSSTTT. The span at 480–490 shows a compositional bias: polar residues; sequence DGETVTSKGFN.

Belongs to the ATXN10 family.

Its function is as follows. May play a role in the regulation of cytokinesis. The sequence is that of Ataxin-10 homolog (atxn10) from Dictyostelium discoideum (Social amoeba).